Consider the following 424-residue polypeptide: Glutamyl-tRNA reductase (424 aa).

Substrate-binding positions include 49-52 (TCNR), S107, 112-114 (EPQ), and Q118. C50 (nucleophile) is an active-site residue. Residue 187-192 (GAGETI) coordinates NADP(+).

It belongs to the glutamyl-tRNA reductase family. Homodimer.

It catalyses the reaction (S)-4-amino-5-oxopentanoate + tRNA(Glu) + NADP(+) = L-glutamyl-tRNA(Glu) + NADPH + H(+). It participates in porphyrin-containing compound metabolism; protoporphyrin-IX biosynthesis; 5-aminolevulinate from L-glutamyl-tRNA(Glu): step 1/2. Its function is as follows. Catalyzes the NADPH-dependent reduction of glutamyl-tRNA(Glu) to glutamate 1-semialdehyde (GSA). The polypeptide is Glutamyl-tRNA reductase (Pseudomonas fluorescens (strain ATCC BAA-477 / NRRL B-23932 / Pf-5)).